Reading from the N-terminus, the 346-residue chain is 3 beta-hydroxysteroid dehydrogenase/Delta 5--&gt;4-isomerase (346 aa).

Residue Y147 is the Proton acceptor of the active site. K151 lines the NAD(+) pocket.

The protein belongs to the 3-beta-HSD family.

It carries out the reaction a 3beta-hydroxy-Delta(5)-steroid + NAD(+) = a 3-oxo-Delta(5)-steroid + NADH + H(+). The enzyme catalyses a 3-oxo-Delta(5)-steroid = a 3-oxo-Delta(4)-steroid. Its pathway is lipid metabolism; steroid biosynthesis. Functionally, catalyzes the oxidative conversion of Delta(5)-ene-3-beta-hydroxy steroid, and the oxidative conversion of ketosteroids. The 3-beta-HSD enzymatic system plays a crucial role in the biosynthesis of all classes of hormonal steroids. During viral infection, steroid production contributes to virulence by inhibiting the host inflammatory response. This chain is 3 beta-hydroxysteroid dehydrogenase/Delta 5--&gt;4-isomerase (OPG174), found in Homo sapiens (Human).